Here is a 449-residue protein sequence, read N- to C-terminus: UDP-N-acetylmuramate--L-alanine ligase (449 aa).

Gly121–Ser127 is a binding site for ATP.

It belongs to the MurCDEF family.

The protein resides in the cytoplasm. The catalysed reaction is UDP-N-acetyl-alpha-D-muramate + L-alanine + ATP = UDP-N-acetyl-alpha-D-muramoyl-L-alanine + ADP + phosphate + H(+). The protein operates within cell wall biogenesis; peptidoglycan biosynthesis. Its function is as follows. Cell wall formation. This is UDP-N-acetylmuramate--L-alanine ligase from Helicobacter pylori (strain HPAG1).